An 856-amino-acid polypeptide reads, in one-letter code: Histone-lysine N-methyltransferase EZA1 (856 aa).

Polar residues predominate over residues 1-11 (MVTDDSNSSGR). 3 disordered regions span residues 1–34 (MVTD…GLEN), 66–87 (VSPF…NSNM), and 366–473 (NVDS…HHGS). Residues 17 to 28 (DDDDDGEEEEDR) show a composition bias toward acidic residues. Residues 22 to 49 (GEEEEDRLEGLENRLSELKRKIQGERVR) are a coiled coil. Residues 68 to 87 (PFSSAASSRATAEDNGNSNM) are compositionally biased toward polar residues. Basic and acidic residues predominate over residues 374–392 (EQEHGIRGKREVPILKDSN). A compositionally biased stretch (polar residues) spans 393 to 419 (DLPNLSNKKQKTAASDTKMSFVNSVPS). Residues 438 to 451 (KVNRDSEADAKEVG) are compositionally biased toward basic and acidic residues. The SANT domain maps to 489–539 (PSTEWNPIEKDLYLKGVEIFGRNSCLIARNLLSGLKTCLDVSNYMRENEVS). The 100-residue stretch at 594 to 693 (WKRIAGGKNQ…SLGEAPRRGE (100 aa)) folds into the CXC domain. In terms of domain architecture, SET spans 707–822 (QRILLGKSDV…ASEELFYDYR (116 aa)). Position 821 (Tyr-821) interacts with S-adenosyl-L-methionine. Positions 827–856 (QAPVWARKPEGSKKDDSAITHRRARKHQSH) are disordered. Over residues 833-845 (RKPEGSKKDDSAI) the composition is skewed to basic and acidic residues. A Nuclear localization signal motif is present at residues 838–845 (SKKDDSAI). The segment covering 846-856 (THRRARKHQSH) has biased composition (basic residues).

Belongs to the class V-like SAM-binding methyltransferase superfamily. Histone-lysine methyltransferase family. EZ subfamily. As to quaternary structure, component of the plant homeodomain / polycomb repressive complex 2 (PHD-PRC2) large complex during prolonged cold, composed of core PRC2 components (VRN2, EZA1, FIE and MSI1), and three related PHD finger proteins (VIL1, VIL2 and VIN3) that mediates histone H3 trimethylation on 'Lys-27' H3K27me3. Interacts with TAF13. Interacts with EOL1. Interacts (via SANT domain) with HXK1 in the nucleus.

The protein localises to the nucleus. The catalysed reaction is L-lysyl(27)-[histone H3] + 3 S-adenosyl-L-methionine = N(6),N(6),N(6)-trimethyl-L-lysyl(27)-[histone H3] + 3 S-adenosyl-L-homocysteine + 3 H(+). In terms of biological role, polycomb group (PcG) protein. Catalytic subunit of some PcG multiprotein complex, which methylates 'Lys-27' of histone H3, leading to transcriptional repression of the affected target genes, mainly abscisic acid (ABA) responsive elements. PcG proteins act by forming multiprotein complexes, which are required to maintain the transcriptionally repressive state of homeotic genes throughout development. PcG proteins are not required to initiate repression, but to maintain it during later stages of development. Forms a nuclear complex with CLF and HXK1 to target common glucose-responsive genes and regulate glucose signaling by glucose-mediated gene repression. Affects the recruitment of HXK1 to the target chromatin. The chain is Histone-lysine N-methyltransferase EZA1 from Arabidopsis thaliana (Mouse-ear cress).